A 419-amino-acid chain; its full sequence is MPYDKVIVPRDGAKITVNADLSLNVPNHPIIPFIEGDGIGVDITPVMIKVVDAAVAKAYQGKKSIVWMEVYCGEKASKIYDGEYMPTETLEILREYVISIKGPLTTPVGGGMRSLNVALRQELDLYVCQRPVRWFEGVPSPVHSPELTDMVIFRENSEDIYAGIEWKAGSDDAKKVIKFLKEEMGVTKIRFSDDCGIGIKPVSKEGSQRLVRKAIQHAIDNDLPSVTLVHKGNIMKFTEGAFKEWGYELAAERFGAELLDGGPWMTMKNPKTGNDIIIKDVIADAFLQQILMRPAEYSVVATLNLNGDYISDALAAEVGGIGIAPGANKGGSIAVYEATHGTAPKYAGQDKVNPGSLILSAEMMLRDMGWIEAADLVIAGIKGAIKNKTVTYDFERLMPDAILLSSSEFGKAIIKHMDA.

NADP(+) is bound at residue threonine 105. 5 residues coordinate D-threo-isocitrate: serine 114, asparagine 116, arginine 120, arginine 130, and arginine 154. Aspartate 308 is a binding site for Mg(2+). NADP(+)-binding positions include 340 to 346 (HGTAPKY), asparagine 353, tyrosine 392, and arginine 396.

Belongs to the isocitrate and isopropylmalate dehydrogenases family. Homodimer. It depends on Mg(2+) as a cofactor. The cofactor is Mn(2+).

It carries out the reaction D-threo-isocitrate + NADP(+) = 2-oxoglutarate + CO2 + NADPH. Its activity is regulated as follows. IDH activity is not significantly affected by monovalent cations. The combined addition of Mn(2+) and another divalent cation results in the decrease of the activity. Its function is as follows. Catalyzes the oxidative decarboxylation of isocitrate to 2-oxoglutarate and carbon dioxide with the concomitant reduction of NADP(+). Cannot use NAD(+). This chain is Isocitrate dehydrogenase [NADP] 1, found in Psychrobacter sp. (strain 13A).